The chain runs to 380 residues: Queuine tRNA-ribosyltransferase (380 aa).

Asp-96 (proton acceptor) is an active-site residue. Substrate contacts are provided by residues 96-100 (DSGGF), Asp-150, Gln-193, and Gly-220. Residues 251–257 (GVGAPDS) are RNA binding. Asp-270 serves as the catalytic Nucleophile. Residues 275 to 279 (TRIAR) form an RNA binding; important for wobble base 34 recognition region. Zn(2+) is bound by residues Cys-308, Cys-310, Cys-313, and His-339.

Belongs to the queuine tRNA-ribosyltransferase family. Homodimer. Within each dimer, one monomer is responsible for RNA recognition and catalysis, while the other monomer binds to the replacement base PreQ1. Zn(2+) is required as a cofactor.

It carries out the reaction 7-aminomethyl-7-carbaguanine + guanosine(34) in tRNA = 7-aminomethyl-7-carbaguanosine(34) in tRNA + guanine. The protein operates within tRNA modification; tRNA-queuosine biosynthesis. Catalyzes the base-exchange of a guanine (G) residue with the queuine precursor 7-aminomethyl-7-deazaguanine (PreQ1) at position 34 (anticodon wobble position) in tRNAs with GU(N) anticodons (tRNA-Asp, -Asn, -His and -Tyr). Catalysis occurs through a double-displacement mechanism. The nucleophile active site attacks the C1' of nucleotide 34 to detach the guanine base from the RNA, forming a covalent enzyme-RNA intermediate. The proton acceptor active site deprotonates the incoming PreQ1, allowing a nucleophilic attack on the C1' of the ribose to form the product. After dissociation, two additional enzymatic reactions on the tRNA convert PreQ1 to queuine (Q), resulting in the hypermodified nucleoside queuosine (7-(((4,5-cis-dihydroxy-2-cyclopenten-1-yl)amino)methyl)-7-deazaguanosine). In Streptococcus mutans serotype c (strain ATCC 700610 / UA159), this protein is Queuine tRNA-ribosyltransferase.